The primary structure comprises 301 residues: XIAP-associated factor 1 (301 aa).

The segment at 22-99 (LHEAYCLRFL…KLDMQLSKLE (78 aa)) adopts a TRAF-type zinc-finger fold. A disordered region spans residues 189 to 257 (ILPSSLPSQA…KPRTSSPRGD (69 aa)). The segment covering 193–205 (SLPSQAAENQTST) has biased composition (polar residues).

As to quaternary structure, interacts with BIRC4; the interaction is not detected in. Interacts with BIRC1, BIRC2, BIRC3, BIRC7 and BIRC8. Part of an complex consisting of BIRC4, XAF1 and BIRC5; the complex formation requires IFN-beta stimulation. Interacts with RNF114, the interaction increases XAF1 stability and proapoptotic effects, and may regulate IFN signaling. Widely expressed. Expression is frequently down-regulated in cancer cell lines. Isoform 5 is widely expressed. Expressed in placenta (at protein level).

Its subcellular location is the cytoplasm. It localises to the nucleus. The protein resides in the mitochondrion. Functionally, seems to function as a negative regulator of members of the IAP (inhibitor of apoptosis protein) family. Inhibits anti-caspase activity of BIRC4. Induces cleavage and inactivation of BIRC4 independent of caspase activation. Mediates TNF-alpha-induced apoptosis and is involved in apoptosis in trophoblast cells. May inhibit BIRC4 indirectly by activating the mitochondrial apoptosis pathway. After translocation to mitochondria, promotes translocation of BAX to mitochondria and cytochrome c release from mitochondria. Seems to promote the redistribution of BIRC4 from the cytoplasm to the nucleus, probably independent of BIRC4 inactivation which seems to occur in the cytoplasm. The BIRC4-XAF1 complex mediates down-regulation of BIRC5/survivin; the process requires the E3 ligase activity of BIRC4. Seems to be involved in cellular sensitivity to the proapoptotic actions of TRAIL. May be a tumor suppressor by mediating apoptosis resistance of cancer cells. This is XIAP-associated factor 1 (XAF1) from Homo sapiens (Human).